A 741-amino-acid polypeptide reads, in one-letter code: Phosphoribosylformylglycinamidine synthase subunit PurL (741 aa).

H54 is a catalytic residue. The ATP site is built by Y57 and K98. Mg(2+) is bound at residue E100. Substrate contacts are provided by residues 101-104 (SHNH) and R123. The active-site Proton acceptor is H102. D124 contacts Mg(2+). Q251 contacts substrate. A Mg(2+)-binding site is contributed by D279. 323–325 (ESQ) serves as a coordination point for substrate. Residues D510 and G547 each contribute to the ATP site. N548 is a binding site for Mg(2+). A substrate-binding site is contributed by S550.

Belongs to the FGAMS family. As to quaternary structure, monomer. Part of the FGAM synthase complex composed of 1 PurL, 1 PurQ and 2 PurS subunits.

The protein localises to the cytoplasm. The enzyme catalyses N(2)-formyl-N(1)-(5-phospho-beta-D-ribosyl)glycinamide + L-glutamine + ATP + H2O = 2-formamido-N(1)-(5-O-phospho-beta-D-ribosyl)acetamidine + L-glutamate + ADP + phosphate + H(+). It functions in the pathway purine metabolism; IMP biosynthesis via de novo pathway; 5-amino-1-(5-phospho-D-ribosyl)imidazole from N(2)-formyl-N(1)-(5-phospho-D-ribosyl)glycinamide: step 1/2. Its function is as follows. Part of the phosphoribosylformylglycinamidine synthase complex involved in the purines biosynthetic pathway. Catalyzes the ATP-dependent conversion of formylglycinamide ribonucleotide (FGAR) and glutamine to yield formylglycinamidine ribonucleotide (FGAM) and glutamate. The FGAM synthase complex is composed of three subunits. PurQ produces an ammonia molecule by converting glutamine to glutamate. PurL transfers the ammonia molecule to FGAR to form FGAM in an ATP-dependent manner. PurS interacts with PurQ and PurL and is thought to assist in the transfer of the ammonia molecule from PurQ to PurL. The protein is Phosphoribosylformylglycinamidine synthase subunit PurL of Picrophilus torridus (strain ATCC 700027 / DSM 9790 / JCM 10055 / NBRC 100828 / KAW 2/3).